The chain runs to 335 residues: Large ribosomal subunit protein uL3 (335 aa).

Belongs to the universal ribosomal protein uL3 family. Part of the 50S ribosomal subunit. Forms a cluster with proteins L14 and L24e.

One of the primary rRNA binding proteins, it binds directly near the 3'-end of the 23S rRNA, where it nucleates assembly of the 50S subunit. The protein is Large ribosomal subunit protein uL3 of Methanocaldococcus jannaschii (strain ATCC 43067 / DSM 2661 / JAL-1 / JCM 10045 / NBRC 100440) (Methanococcus jannaschii).